The chain runs to 931 residues: Phosphoenolpyruvate carboxylase (931 aa).

Catalysis depends on residues H158 and K593.

Belongs to the PEPCase type 1 family. Requires Mg(2+) as cofactor.

The catalysed reaction is oxaloacetate + phosphate = phosphoenolpyruvate + hydrogencarbonate. Its function is as follows. Forms oxaloacetate, a four-carbon dicarboxylic acid source for the tricarboxylic acid cycle. The chain is Phosphoenolpyruvate carboxylase from Azorhizobium caulinodans (strain ATCC 43989 / DSM 5975 / JCM 20966 / LMG 6465 / NBRC 14845 / NCIMB 13405 / ORS 571).